The chain runs to 485 residues: Glutamyl-tRNA(Gln) amidotransferase subunit A (485 aa).

Catalysis depends on charge relay system residues lysine 79 and serine 154. Catalysis depends on serine 178, which acts as the Acyl-ester intermediate.

It belongs to the amidase family. GatA subfamily. Heterotrimer of A, B and C subunits.

The enzyme catalyses L-glutamyl-tRNA(Gln) + L-glutamine + ATP + H2O = L-glutaminyl-tRNA(Gln) + L-glutamate + ADP + phosphate + H(+). Functionally, allows the formation of correctly charged Gln-tRNA(Gln) through the transamidation of misacylated Glu-tRNA(Gln) in organisms which lack glutaminyl-tRNA synthetase. The reaction takes place in the presence of glutamine and ATP through an activated gamma-phospho-Glu-tRNA(Gln). The polypeptide is Glutamyl-tRNA(Gln) amidotransferase subunit A (Staphylococcus aureus (strain Mu3 / ATCC 700698)).